Here is a 159-residue protein sequence, read N- to C-terminus: Cytochrome c-type biogenesis protein CcmE (159 aa).

The Cytoplasmic segment spans residues Met-1–Arg-8. A helical; Signal-anchor for type II membrane protein transmembrane segment spans residues Leu-9–Ala-29. Residues Leu-30–Ser-159 are Periplasmic-facing. The tract at residues Lys-129–Ser-159 is disordered. Heme contacts are provided by His-130 and Tyr-134.

Belongs to the CcmE/CycJ family.

It localises to the cell inner membrane. In terms of biological role, heme chaperone required for the biogenesis of c-type cytochromes. Transiently binds heme delivered by CcmC and transfers the heme to apo-cytochromes in a process facilitated by CcmF and CcmH. This chain is Cytochrome c-type biogenesis protein CcmE, found in Salmonella paratyphi A (strain ATCC 9150 / SARB42).